A 394-amino-acid chain; its full sequence is Elongation factor Tu (394 aa).

Residues 10–204 form the tr-type G domain; it reads KPHLNVGTIG…TLDTYIEDPV (195 aa). Residues 19–26 are G1; it reads GHVDHGKT. 19 to 26 is a binding site for GTP; the sequence is GHVDHGKT. Thr-26 provides a ligand contact to Mg(2+). Residues 60-64 form a G2 region; sequence GITIK. The G3 stretch occupies residues 81–84; sequence DCPG. GTP contacts are provided by residues 81-85 and 136-139; these read DCPGH and NKCD. Positions 136 to 139 are G4; the sequence is NKCD. The segment at 174–176 is G5; sequence SAL.

This sequence belongs to the TRAFAC class translation factor GTPase superfamily. Classic translation factor GTPase family. EF-Tu/EF-1A subfamily. As to quaternary structure, monomer.

It is found in the cytoplasm. It catalyses the reaction GTP + H2O = GDP + phosphate + H(+). Functionally, GTP hydrolase that promotes the GTP-dependent binding of aminoacyl-tRNA to the A-site of ribosomes during protein biosynthesis. The sequence is that of Elongation factor Tu from Onion yellows phytoplasma (strain OY-M).